The chain runs to 140 residues: Large ribosomal subunit protein uL11 (140 aa).

It belongs to the universal ribosomal protein uL11 family. Part of the ribosomal stalk of the 50S ribosomal subunit. Interacts with L10 and the large rRNA to form the base of the stalk. L10 forms an elongated spine to which L12 dimers bind in a sequential fashion forming a multimeric L10(L12)X complex. Post-translationally, one or more lysine residues are methylated.

Forms part of the ribosomal stalk which helps the ribosome interact with GTP-bound translation factors. This is Large ribosomal subunit protein uL11 from Syntrophotalea carbinolica (strain DSM 2380 / NBRC 103641 / GraBd1) (Pelobacter carbinolicus).